The following is a 340-amino-acid chain: Heat-inducible transcription repressor HrcA (340 aa).

This sequence belongs to the HrcA family.

Negative regulator of class I heat shock genes (grpE-dnaK-dnaJ and groELS operons). Prevents heat-shock induction of these operons. The polypeptide is Heat-inducible transcription repressor HrcA (Mycoplasmopsis synoviae (strain 53) (Mycoplasma synoviae)).